The chain runs to 210 residues: Large ribosomal subunit protein bL25 (210 aa).

Positions Leu179–Gly210 are disordered. Basic and acidic residues predominate over residues Glu201–Gly210.

It belongs to the bacterial ribosomal protein bL25 family. CTC subfamily. As to quaternary structure, part of the 50S ribosomal subunit; part of the 5S rRNA/L5/L18/L25 subcomplex. Contacts the 5S rRNA. Binds to the 5S rRNA independently of L5 and L18.

Its function is as follows. This is one of the proteins that binds to the 5S RNA in the ribosome where it forms part of the central protuberance. This Geobacillus thermodenitrificans (strain NG80-2) protein is Large ribosomal subunit protein bL25.